We begin with the raw amino-acid sequence, 432 residues long: Trigger factor (432 aa).

The 86-residue stretch at 161–246 folds into the PPIase FKBP-type domain; sequence EDRVTIDFTG…LKKVEERELP (86 aa).

The protein belongs to the FKBP-type PPIase family. Tig subfamily. As to quaternary structure, homodimer and monomer. In vivo most of the ribosomes are in complex with monomeric TF. Uncomplexed TF, however, is in a monomer-dimer equilibrium with approximately two thirds of TF existing in a dimeric state.

It localises to the cytoplasm. It catalyses the reaction [protein]-peptidylproline (omega=180) = [protein]-peptidylproline (omega=0). Functionally, involved in protein export. Acts as a chaperone by maintaining the newly synthesized protein in an open conformation. Functions as a peptidyl-prolyl cis-trans isomerase. This chain is Trigger factor, found in Escherichia coli O6:K15:H31 (strain 536 / UPEC).